Here is a 504-residue protein sequence, read N- to C-terminus: Maturase K (504 aa).

Belongs to the intron maturase 2 family. MatK subfamily.

The protein resides in the plastid. The protein localises to the chloroplast. In terms of biological role, usually encoded in the trnK tRNA gene intron. Probably assists in splicing its own and other chloroplast group II introns. The sequence is that of Maturase K from Bombax buonopozense (Red-flowered silk cotton tree).